A 252-amino-acid chain; its full sequence is UPF0736 protein OB1207 (252 aa).

The protein belongs to the UPF0736 family.

This Oceanobacillus iheyensis (strain DSM 14371 / CIP 107618 / JCM 11309 / KCTC 3954 / HTE831) protein is UPF0736 protein OB1207.